The sequence spans 63 residues: MFHLVDFQVTIAEILIIIMRTFRIAIWNLDVIISSIVRQLFKPLTKKNYSELDDEEPMELDYP.

The tract at residues 54-63 is critical for disrupting nuclear import; the sequence is DEEPMELDYP.

It belongs to the coronaviruses accessory protein 6 family. As to quaternary structure, may interact with nsp8. Interacts with protein ORF9b. Interacts with host RAE1 in NUP98-RAE1 complex; the interaction disrupts the host nuclear import. Interacts with host KPNA2.

It is found in the host endoplasmic reticulum membrane. It localises to the host Golgi apparatus membrane. Its subcellular location is the host cytoplasm. In terms of biological role, disrupts bidirectional nucleocytoplasmic transport by interacting with host RAE1-NUP98 complex. Disrupts cell nuclear import complex formation also by tethering karyopherin alpha 2 and karyopherin beta 1 to the membrane. Retention of import factors at the ER/Golgi membrane leads to a loss of transport into the nucleus. Thereby prevents STAT1 nuclear translocation in response to interferon signaling, thus blocking the expression of interferon stimulated genes (ISGs) that display multiple antiviral activities. This Homo sapiens (Human) protein is ORF6 protein.